The following is a 384-amino-acid chain: Chorismate synthase (384 aa).

Positions 40 and 46 each coordinate NADP(+). FMN contacts are provided by residues 128–130, Gly-292, 307–311, and Arg-333; these read RAS and KPIPT.

The protein belongs to the chorismate synthase family. As to quaternary structure, homotetramer. The cofactor is FMNH2.

The catalysed reaction is 5-O-(1-carboxyvinyl)-3-phosphoshikimate = chorismate + phosphate. Its pathway is metabolic intermediate biosynthesis; chorismate biosynthesis; chorismate from D-erythrose 4-phosphate and phosphoenolpyruvate: step 7/7. In terms of biological role, catalyzes the anti-1,4-elimination of the C-3 phosphate and the C-6 proR hydrogen from 5-enolpyruvylshikimate-3-phosphate (EPSP) to yield chorismate, which is the branch point compound that serves as the starting substrate for the three terminal pathways of aromatic amino acid biosynthesis. This reaction introduces a second double bond into the aromatic ring system. In Carboxydothermus hydrogenoformans (strain ATCC BAA-161 / DSM 6008 / Z-2901), this protein is Chorismate synthase.